The sequence spans 1070 residues: DNA-directed RNA polymerase subunit beta (1070 aa).

Belongs to the RNA polymerase beta chain family. In plastids the minimal PEP RNA polymerase catalytic core is composed of four subunits: alpha, beta, beta', and beta''. When a (nuclear-encoded) sigma factor is associated with the core the holoenzyme is formed, which can initiate transcription.

The protein localises to the plastid. The protein resides in the chloroplast. It carries out the reaction RNA(n) + a ribonucleoside 5'-triphosphate = RNA(n+1) + diphosphate. Its function is as follows. DNA-dependent RNA polymerase catalyzes the transcription of DNA into RNA using the four ribonucleoside triphosphates as substrates. The polypeptide is DNA-directed RNA polymerase subunit beta (Cucumis sativus (Cucumber)).